The primary structure comprises 350 residues: Serine-threonine kinase receptor-associated protein (350 aa).

WD repeat units follow at residues 12 to 56, 57 to 96, 98 to 137, 141 to 179, 180 to 212, 221 to 262, and 263 to 302; these read GHTR…GTFL, GHKGAVWGATLNKDATKAATAAADFTAKVWDAVSGDELMT, AHKHIVKTVDFTQDSNYLLTGGQDKLLRIYDLNKPEAEPK, GHTSGIKKALWCSEDKQILSADDKTVRLWDHATMTEVKS, LNFNMSVSSMEYIPEGEILVITYGRSIAFHSAV, EAPA…ESYK, and GHFGPIHCVRFSPDGELYASGSEDGTLRLWQTVVGKTYGL. Phosphoserine occurs at positions 312, 335, and 338. A disordered region spans residues 326-350; that stretch reads AEEELEEIASENSDSIYSSTPEVKA. Residues 337–350 are compositionally biased toward polar residues; the sequence is NSDSIYSSTPEVKA. Residue Y342 is modified to Phosphotyrosine.

It belongs to the WD repeat STRAP family. As to quaternary structure, part of the core SMN complex that contains SMN1, GEMIN2/SIP1, DDX20/GEMIN3, GEMIN4, GEMIN5, GEMIN6, GEMIN7, GEMIN8 and STRAP/UNRIP. Part of the SMN-Sm complex that contains SMN1, GEMIN2/SIP1, DDX20/GEMIN3, GEMIN4, GEMIN5, GEMIN6, GEMIN7, GEMIN8, STRAP/UNRIP and the Sm proteins SNRPB, SNRPD1, SNRPD2, SNRPD3, SNRPE, SNRPF and SNRPG. Interacts directly with GEMIN6 and GEMIN7. Associates with the SMN complex in the cytoplasm but not in the nucleus. Also interacts with CSDE1/UNR and MAWBP. Interacts with PDPK1. Interacts with TRIM48.

The protein localises to the cytoplasm. Its subcellular location is the nucleus. Its function is as follows. The SMN complex catalyzes the assembly of small nuclear ribonucleoproteins (snRNPs), the building blocks of the spliceosome, and thereby plays an important role in the splicing of cellular pre-mRNAs. Most spliceosomal snRNPs contain a common set of Sm proteins SNRPB, SNRPD1, SNRPD2, SNRPD3, SNRPE, SNRPF and SNRPG that assemble in a heptameric protein ring on the Sm site of the small nuclear RNA to form the core snRNP (Sm core). In the cytosol, the Sm proteins SNRPD1, SNRPD2, SNRPE, SNRPF and SNRPG are trapped in an inactive 6S pICln-Sm complex by the chaperone CLNS1A that controls the assembly of the core snRNP. To assemble core snRNPs, the SMN complex accepts the trapped 5Sm proteins from CLNS1A forming an intermediate. Binding of snRNA inside 5Sm triggers eviction of the SMN complex, thereby allowing binding of SNRPD3 and SNRPB to complete assembly of the core snRNP. STRAP plays a role in the cellular distribution of the SMN complex. Negatively regulates TGF-beta signaling but positively regulates the PDPK1 kinase activity by enhancing its autophosphorylation and by significantly reducing the association of PDPK1 with 14-3-3 protein. This is Serine-threonine kinase receptor-associated protein (Strap) from Rattus norvegicus (Rat).